A 353-amino-acid chain; its full sequence is UDP-N-acetylglucosamine--N-acetylmuramyl-(pentapeptide) pyrophosphoryl-undecaprenol N-acetylglucosamine transferase (353 aa).

Residues Thr-10–Gly-12, Asn-124, Ser-183, and Gln-283 each bind UDP-N-acetyl-alpha-D-glucosamine.

The protein belongs to the glycosyltransferase 28 family. MurG subfamily.

The protein localises to the cell inner membrane. The catalysed reaction is di-trans,octa-cis-undecaprenyl diphospho-N-acetyl-alpha-D-muramoyl-L-alanyl-D-glutamyl-meso-2,6-diaminopimeloyl-D-alanyl-D-alanine + UDP-N-acetyl-alpha-D-glucosamine = di-trans,octa-cis-undecaprenyl diphospho-[N-acetyl-alpha-D-glucosaminyl-(1-&gt;4)]-N-acetyl-alpha-D-muramoyl-L-alanyl-D-glutamyl-meso-2,6-diaminopimeloyl-D-alanyl-D-alanine + UDP + H(+). The protein operates within cell wall biogenesis; peptidoglycan biosynthesis. Its function is as follows. Cell wall formation. Catalyzes the transfer of a GlcNAc subunit on undecaprenyl-pyrophosphoryl-MurNAc-pentapeptide (lipid intermediate I) to form undecaprenyl-pyrophosphoryl-MurNAc-(pentapeptide)GlcNAc (lipid intermediate II). This is UDP-N-acetylglucosamine--N-acetylmuramyl-(pentapeptide) pyrophosphoryl-undecaprenol N-acetylglucosamine transferase from Helicobacter pylori (strain G27).